The following is a 561-amino-acid chain: DNA ligase B (561 aa).

Lys-124 serves as the catalytic N6-AMP-lysine intermediate.

Belongs to the NAD-dependent DNA ligase family. LigB subfamily.

The catalysed reaction is NAD(+) + (deoxyribonucleotide)n-3'-hydroxyl + 5'-phospho-(deoxyribonucleotide)m = (deoxyribonucleotide)n+m + AMP + beta-nicotinamide D-nucleotide.. Catalyzes the formation of phosphodiester linkages between 5'-phosphoryl and 3'-hydroxyl groups in double-stranded DNA using NAD as a coenzyme and as the energy source for the reaction. The sequence is that of DNA ligase B from Cronobacter sakazakii (strain ATCC BAA-894) (Enterobacter sakazakii).